The primary structure comprises 307 residues: Ribonuclease Z (307 aa).

His63, His65, Asp67, His68, His143, Asp213, and His271 together coordinate Zn(2+). Catalysis depends on Asp67, which acts as the Proton acceptor.

Belongs to the RNase Z family. In terms of assembly, homodimer. Requires Zn(2+) as cofactor.

It carries out the reaction Endonucleolytic cleavage of RNA, removing extra 3' nucleotides from tRNA precursor, generating 3' termini of tRNAs. A 3'-hydroxy group is left at the tRNA terminus and a 5'-phosphoryl group is left at the trailer molecule.. Its function is as follows. Zinc phosphodiesterase, which displays some tRNA 3'-processing endonuclease activity. Probably involved in tRNA maturation, by removing a 3'-trailer from precursor tRNA. This chain is Ribonuclease Z, found in Lactococcus lactis subsp. cremoris (strain SK11).